Reading from the N-terminus, the 175-residue chain is Small ribosomal subunit protein uS5 (175 aa).

An S5 DRBM domain is found at Leu-11–Val-74.

This sequence belongs to the universal ribosomal protein uS5 family. As to quaternary structure, part of the 30S ribosomal subunit. Contacts proteins S4 and S8.

Functionally, with S4 and S12 plays an important role in translational accuracy. In terms of biological role, located at the back of the 30S subunit body where it stabilizes the conformation of the head with respect to the body. In Rickettsia prowazekii (strain Madrid E), this protein is Small ribosomal subunit protein uS5.